The following is a 411-amino-acid chain: Na(+)/H(+) antiporter NhaA 2 (411 aa).

10 helical membrane passes run 18 to 38 (VGGS…NSPV), 59 to 79 (LTVG…VAGL), 97 to 117 (LLPI…AATI), 127 to 147 (GWAI…ALTG), 167 to 187 (LLAI…LWLL), 218 to 238 (WYCM…LGLL), 261 to 281 (PLSA…VALS), 297 to 317 (VIAG…WLAI), 338 to 358 (VLGA…LAGI), and 366 to 386 (IAKV…SALL).

This sequence belongs to the NhaA Na(+)/H(+) (TC 2.A.33) antiporter family.

It localises to the cell membrane. The catalysed reaction is Na(+)(in) + 2 H(+)(out) = Na(+)(out) + 2 H(+)(in). In terms of biological role, na(+)/H(+) antiporter that extrudes sodium in exchange for external protons. The sequence is that of Na(+)/H(+) antiporter NhaA 2 from Rhodococcus jostii (strain RHA1).